A 425-amino-acid chain; its full sequence is UPF0597 protein UNCMA_16400 (425 aa).

Belongs to the UPF0597 family.

This chain is UPF0597 protein UNCMA_16400, found in Methanocella arvoryzae (strain DSM 22066 / NBRC 105507 / MRE50).